The chain runs to 103 residues: Large ribosomal subunit protein bL21 (103 aa).

The protein belongs to the bacterial ribosomal protein bL21 family. Part of the 50S ribosomal subunit. Contacts protein L20.

Its function is as follows. This protein binds to 23S rRNA in the presence of protein L20. The polypeptide is Large ribosomal subunit protein bL21 (Tolumonas auensis (strain DSM 9187 / NBRC 110442 / TA 4)).